A 54-amino-acid chain; its full sequence is Photosystem II reaction center protein K (54 aa).

A propeptide spanning residues Met1–Ala17 is cleaved from the precursor. The chain crosses the membrane as a helical span at residues Leu29 to Ala49.

Belongs to the PsbK family. As to quaternary structure, PSII is composed of 1 copy each of membrane proteins PsbA, PsbB, PsbC, PsbD, PsbE, PsbF, PsbH, PsbI, PsbJ, PsbK, PsbL, PsbM, PsbT, PsbY, PsbZ, Psb30/Ycf12, at least 3 peripheral proteins of the oxygen-evolving complex and a large number of cofactors. It forms dimeric complexes.

Its subcellular location is the plastid. The protein resides in the chloroplast thylakoid membrane. Its function is as follows. One of the components of the core complex of photosystem II (PSII). PSII is a light-driven water:plastoquinone oxidoreductase that uses light energy to abstract electrons from H(2)O, generating O(2) and a proton gradient subsequently used for ATP formation. It consists of a core antenna complex that captures photons, and an electron transfer chain that converts photonic excitation into a charge separation. The sequence is that of Photosystem II reaction center protein K from Euglena mutabilis.